The chain runs to 585 residues: Nucleoporin p58/p45 (585 aa).

5 repeat units span residues 7–8 (FG), 30–31 (FG), 42–43 (FG), 61–62 (FG), and 66–67 (FG). Residues 7-565 (FGSGTLGSTT…VSNPASAGFG (559 aa)) form a 14 X 2 AA repeats of F-G region. Residues 194–232 (TSAASSEGLGGIDFSTSSDKKSDKTGTRPEDSKALKDEN) form a disordered region. The segment covering 211-232 (SDKKSDKTGTRPEDSKALKDEN) has biased composition (basic and acidic residues). Coiled coils occupy residues 242–262 (ENLQKFVKEQKQVQEEISRMS) and 300–367 (ETAQ…SHIT). Thr317 carries the post-translational modification Phosphothreonine. 9 consecutive repeat copies span residues 474-475 (FG), 478-479 (FG), 499-500 (FG), 505-506 (FG), 515-516 (FG), 517-518 (FG), 531-532 (FG), 554-555 (FG), and 564-565 (FG). The disordered stretch occupies residues 563 to 585 (GFGTGGQLLQLKRPPAGNKRGKR).

The protein belongs to the NUP58 family. As to quaternary structure, component of the p62 complex, a complex composed of NUP62, NUP54, and isoform p58 and isoform p45 of NUP58. Isoform p58 interacts with NUTF2. Isoform p58 interacts with SRP1-alpha and Importin p97 proteins when they are together, but not with SRP1-alpha protein alone. In terms of processing, O-glycosylated. Expressed in liver.

It is found in the nucleus. The protein localises to the nuclear pore complex. It localises to the nucleus membrane. Component of the nuclear pore complex, a complex required for the trafficking across the nuclear membrane. The polypeptide is Nucleoporin p58/p45 (Rattus norvegicus (Rat)).